The primary structure comprises 29 residues: Cyclotide cter-K (29 aa).

The cyclopeptide (His-Asn) cross-link spans 1–29 (HEPCGESCVFIPCITTVVGCSCKNKVCYN). Intrachain disulfides connect Cys-4–Cys-20, Cys-8–Cys-22, and Cys-13–Cys-27.

Post-translationally, contains 3 disulfide bonds. In terms of processing, this is a cyclic peptide.

Probably participates in a plant defense mechanism. This is Cyclotide cter-K from Clitoria ternatea (Butterfly pea).